A 447-amino-acid polypeptide reads, in one-letter code: Probable protein phosphatase 2C 71 (447 aa).

One can recognise a PPM-type phosphatase domain in the interval 33-279 (SYGYASSAGK…DNITCVVVRF (247 aa)). 4 residues coordinate Mn(2+): Asp-69, Gly-70, Asp-231, and Asp-270. The span at 284-297 (SANNNGSSSSEEAN) shows a compositional bias: low complexity. The interval 284 to 447 (SANNNGSSSS…ARKTTPSIFN (164 aa)) is disordered. Residues 305-331 (NDSDHKISAKETNQDHTTVNKDLDRNT) are compositionally biased toward basic and acidic residues. 2 stretches are compositionally biased toward polar residues: residues 346-374 (ADNS…TGEK) and 392-423 (KVPN…GSTG). Residues 424–438 (ERNRKPIKVHSDSAA) are compositionally biased toward basic and acidic residues.

This sequence belongs to the PP2C family. The cofactor is Mg(2+). Requires Mn(2+) as cofactor.

It carries out the reaction O-phospho-L-seryl-[protein] + H2O = L-seryl-[protein] + phosphate. The catalysed reaction is O-phospho-L-threonyl-[protein] + H2O = L-threonyl-[protein] + phosphate. This Arabidopsis thaliana (Mouse-ear cress) protein is Probable protein phosphatase 2C 71.